The primary structure comprises 397 residues: Elongation factor Tu (397 aa).

The tr-type G domain maps to 10 to 207 (KPHVNIGTIG…AVDESIPDPV (198 aa)). The tract at residues 19–26 (GHVDHGKT) is G1. 19 to 26 (GHVDHGKT) contributes to the GTP binding site. Threonine 26 provides a ligand contact to Mg(2+). The G2 stretch occupies residues 63–67 (GITIN). The tract at residues 84 to 87 (DAPG) is G3. Residues 84 to 88 (DAPGH) and 139 to 142 (NKAD) each bind GTP. The segment at 139–142 (NKAD) is G4. Residues 177-179 (SGL) form a G5 region.

It belongs to the TRAFAC class translation factor GTPase superfamily. Classic translation factor GTPase family. EF-Tu/EF-1A subfamily. Monomer.

The protein resides in the cytoplasm. It catalyses the reaction GTP + H2O = GDP + phosphate + H(+). Functionally, GTP hydrolase that promotes the GTP-dependent binding of aminoacyl-tRNA to the A-site of ribosomes during protein biosynthesis. This is Elongation factor Tu from Tropheryma whipplei (strain Twist) (Whipple's bacillus).